Reading from the N-terminus, the 120-residue chain is Small ribosomal subunit protein uS13 (120 aa).

A disordered region spans residues 96-120 (PCRGQRTRTNARTRKGPRKAIAGKK).

Belongs to the universal ribosomal protein uS13 family. In terms of assembly, part of the 30S ribosomal subunit. Forms a loose heterodimer with protein S19. Forms two bridges to the 50S subunit in the 70S ribosome.

Located at the top of the head of the 30S subunit, it contacts several helices of the 16S rRNA. In the 70S ribosome it contacts the 23S rRNA (bridge B1a) and protein L5 of the 50S subunit (bridge B1b), connecting the 2 subunits; these bridges are implicated in subunit movement. Contacts the tRNAs in the A and P-sites. This Chromobacterium violaceum (strain ATCC 12472 / DSM 30191 / JCM 1249 / CCUG 213 / NBRC 12614 / NCIMB 9131 / NCTC 9757 / MK) protein is Small ribosomal subunit protein uS13.